Consider the following 294-residue polypeptide: Undecaprenyl-diphosphatase (294 aa).

6 helical membrane passes run 39 to 59, 93 to 113, 123 to 143, 197 to 217, 234 to 254, and 265 to 285; these read PGAAFTAIIQIGTELAVILYF, TQMGWFIIIGTLPILIAGLLF, NLWITVTVLIIFGILLWVVDA, VSFLMAIPAVFGAGILEAVSA, ATIAATIVAFVVGYVVIIGFL, and FAIYRIALAVVVALLLICGVL.

Belongs to the UppP family.

It is found in the cell membrane. The enzyme catalyses di-trans,octa-cis-undecaprenyl diphosphate + H2O = di-trans,octa-cis-undecaprenyl phosphate + phosphate + H(+). Its function is as follows. Catalyzes the dephosphorylation of undecaprenyl diphosphate (UPP). Confers resistance to bacitracin. The protein is Undecaprenyl-diphosphatase of Bifidobacterium adolescentis (strain ATCC 15703 / DSM 20083 / NCTC 11814 / E194a).